The primary structure comprises 122 residues: Holo-[acyl-carrier-protein] synthase (122 aa).

Residues D8 and E56 each coordinate Mg(2+).

This sequence belongs to the P-Pant transferase superfamily. AcpS family. It depends on Mg(2+) as a cofactor.

Its subcellular location is the cytoplasm. It carries out the reaction apo-[ACP] + CoA = holo-[ACP] + adenosine 3',5'-bisphosphate + H(+). Transfers the 4'-phosphopantetheine moiety from coenzyme A to a Ser of acyl-carrier-protein. This is Holo-[acyl-carrier-protein] synthase from Salinispora arenicola (strain CNS-205).